The primary structure comprises 399 residues: Elongation factor Tu (399 aa).

Residues 10–209 (KPHVNIGTIG…EVDAYIPTPE (200 aa)) form the tr-type G domain. A G1 region spans residues 19–26 (GHVDHGKT). 19 to 26 (GHVDHGKT) lines the GTP pocket. Thr26 lines the Mg(2+) pocket. A G2 region spans residues 60–64 (GITIA). Residues 81 to 84 (DCPG) are G3. GTP is bound by residues 81–85 (DCPGH) and 136–139 (NKQD). Residues 136–139 (NKQD) are G4. The segment at 174–176 (SAL) is G5.

The protein belongs to the TRAFAC class translation factor GTPase superfamily. Classic translation factor GTPase family. EF-Tu/EF-1A subfamily. Monomer.

It is found in the cytoplasm. It catalyses the reaction GTP + H2O = GDP + phosphate + H(+). In terms of biological role, GTP hydrolase that promotes the GTP-dependent binding of aminoacyl-tRNA to the A-site of ribosomes during protein biosynthesis. This Helicobacter pylori (strain ATCC 700392 / 26695) (Campylobacter pylori) protein is Elongation factor Tu.